Reading from the N-terminus, the 499-residue chain is BTB/POZ domain-containing protein At5g60050 (499 aa).

The segment covering 18-30 has biased composition (low complexity); sequence PSLSFSPSRISSP. The tract at residues 18-57 is disordered; that stretch reads PSLSFSPSRISSPIKLSTASPPLPPPPPPPPNESTLSNPT. The segment covering 38 to 49 has biased composition (pro residues); the sequence is PPLPPPPPPPPN. The 74-residue stretch at 99–172 folds into the BTB domain; the sequence is GDVKLTVVGK…MYSDDLKKKL (74 aa).

Its pathway is protein modification; protein ubiquitination. In terms of biological role, may act as a substrate-specific adapter of an E3 ubiquitin-protein ligase complex (CUL3-RBX1-BTB) which mediates the ubiquitination and subsequent proteasomal degradation of target proteins. The protein is BTB/POZ domain-containing protein At5g60050 of Arabidopsis thaliana (Mouse-ear cress).